Consider the following 299-residue polypeptide: Phosphatidylserine decarboxylase proenzyme (299 aa).

Catalysis depends on charge relay system; for autoendoproteolytic cleavage activity residues Asp-115, His-171, and Ser-258. Ser-258 acts as the Schiff-base intermediate with substrate; via pyruvic acid; for decarboxylase activity in catalysis. Ser-258 is subject to Pyruvic acid (Ser); by autocatalysis.

The protein belongs to the phosphatidylserine decarboxylase family. PSD-B subfamily. Prokaryotic type II sub-subfamily. Heterodimer of a large membrane-associated beta subunit and a small pyruvoyl-containing alpha subunit. Requires pyruvate as cofactor. Post-translationally, is synthesized initially as an inactive proenzyme. Formation of the active enzyme involves a self-maturation process in which the active site pyruvoyl group is generated from an internal serine residue via an autocatalytic post-translational modification. Two non-identical subunits are generated from the proenzyme in this reaction, and the pyruvate is formed at the N-terminus of the alpha chain, which is derived from the carboxyl end of the proenzyme. The autoendoproteolytic cleavage occurs by a canonical serine protease mechanism, in which the side chain hydroxyl group of the serine supplies its oxygen atom to form the C-terminus of the beta chain, while the remainder of the serine residue undergoes an oxidative deamination to produce ammonia and the pyruvoyl prosthetic group on the alpha chain. During this reaction, the Ser that is part of the protease active site of the proenzyme becomes the pyruvoyl prosthetic group, which constitutes an essential element of the active site of the mature decarboxylase.

The protein localises to the cell membrane. It carries out the reaction a 1,2-diacyl-sn-glycero-3-phospho-L-serine + H(+) = a 1,2-diacyl-sn-glycero-3-phosphoethanolamine + CO2. The protein operates within phospholipid metabolism; phosphatidylethanolamine biosynthesis; phosphatidylethanolamine from CDP-diacylglycerol: step 2/2. Its function is as follows. Catalyzes the formation of phosphatidylethanolamine (PtdEtn) from phosphatidylserine (PtdSer). In Chlamydia caviae (strain ATCC VR-813 / DSM 19441 / 03DC25 / GPIC) (Chlamydophila caviae), this protein is Phosphatidylserine decarboxylase proenzyme.